A 499-amino-acid chain; its full sequence is Glutamyl-tRNA(Gln) amidotransferase subunit B, chloroplastic/mitochondrial (499 aa).

This sequence belongs to the GatB/GatE family. GatB subfamily. In terms of assembly, subunit of the heterotrimeric GatCAB amidotransferase (AdT) complex, composed of A, B and C subunits.

The protein resides in the mitochondrion. It localises to the plastid. The protein localises to the chloroplast. It carries out the reaction L-glutamyl-tRNA(Gln) + L-glutamine + ATP + H2O = L-glutaminyl-tRNA(Gln) + L-glutamate + ADP + phosphate + H(+). In terms of biological role, allows the formation of correctly charged Gln-tRNA(Gln) through the transamidation of misacylated Glu-tRNA(Gln) in chloroplasts and mitochondria. The reaction takes place in the presence of glutamine and ATP through an activated gamma-phospho-Glu-tRNA(Gln). This chain is Glutamyl-tRNA(Gln) amidotransferase subunit B, chloroplastic/mitochondrial, found in Ostreococcus lucimarinus (strain CCE9901).